The sequence spans 92 residues: RNA-binding protein Hfq (92 aa).

Residues 9-68 form the Sm domain; the sequence is DPFLNALRRERVPVSIYLVNGIKLQGQVESFDQFVILLKNTVSQMVYKHAISTVVPSRPF.

This sequence belongs to the Hfq family. In terms of assembly, homohexamer.

RNA chaperone that binds small regulatory RNA (sRNAs) and mRNAs to facilitate mRNA translational regulation in response to envelope stress, environmental stress and changes in metabolite concentrations. Also binds with high specificity to tRNAs. The protein is RNA-binding protein Hfq of Shewanella halifaxensis (strain HAW-EB4).